The primary structure comprises 211 residues: Agamous-like MADS-box protein AGL12 (211 aa).

One can recognise an MADS-box domain in the interval 3–57; it reads RGKIQLKRIENPVHRQVTFCKRRTGLLKKAKELSVLCDAEIGVVIFSPQGKLFEL. The K-box domain occupies 95–185; sequence NLDPKDEINV…LEKIEENNNS (91 aa).

As to expression, preferentially expressed in roots. In root meristem, expressed in external cells of columella, lateral root cap and atrichoblasts. In mature root, expressed in the central cylinder. Expressed in leaf vasculature, young floral meristems and nectaries.

Its subcellular location is the nucleus. In terms of biological role, probable transcription activator that regulates root development by controlling cell proliferation in root meristem. May mediate responses to auxin in the root. May act as promoter of the flowering transition through up-regulation of SOC, FT and LFY. The sequence is that of Agamous-like MADS-box protein AGL12 from Arabidopsis thaliana (Mouse-ear cress).